Reading from the N-terminus, the 150-residue chain is uncharacterized protein (150 aa).

It localises to the plastid. It is found in the chloroplast. This is an uncharacterized protein from Pyropia yezoensis (Susabi-nori).